We begin with the raw amino-acid sequence, 426 residues long: Glucose-6-phosphate isomerase (426 aa).

E282 (proton donor) is an active-site residue. Active-site residues include H303 and K419.

Belongs to the GPI family.

The protein resides in the cytoplasm. The catalysed reaction is alpha-D-glucose 6-phosphate = beta-D-fructose 6-phosphate. It participates in carbohydrate biosynthesis; gluconeogenesis. Its pathway is carbohydrate degradation; glycolysis; D-glyceraldehyde 3-phosphate and glycerone phosphate from D-glucose: step 2/4. Functionally, catalyzes the reversible isomerization of glucose-6-phosphate to fructose-6-phosphate. This Mycoplasmoides gallisepticum (strain R(low / passage 15 / clone 2)) (Mycoplasma gallisepticum) protein is Glucose-6-phosphate isomerase.